A 1406-amino-acid polypeptide reads, in one-letter code: DNA-directed RNA polymerase subunit beta' (1406 aa).

Residues Cys70, Cys72, Cys85, and Cys88 each coordinate Zn(2+). Mg(2+)-binding residues include Asp460, Asp462, and Asp464. Positions 814, 888, 895, and 898 each coordinate Zn(2+).

The protein belongs to the RNA polymerase beta' chain family. As to quaternary structure, the RNAP catalytic core consists of 2 alpha, 1 beta, 1 beta' and 1 omega subunit. When a sigma factor is associated with the core the holoenzyme is formed, which can initiate transcription. Mg(2+) is required as a cofactor. Requires Zn(2+) as cofactor.

It carries out the reaction RNA(n) + a ribonucleoside 5'-triphosphate = RNA(n+1) + diphosphate. DNA-dependent RNA polymerase catalyzes the transcription of DNA into RNA using the four ribonucleoside triphosphates as substrates. The chain is DNA-directed RNA polymerase subunit beta' from Yersinia enterocolitica serotype O:8 / biotype 1B (strain NCTC 13174 / 8081).